The following is a 311-amino-acid chain: MRTIKVGSRRSKLAITQTKWVIQKLSELNPSYSFEIKEIVTKGDQILDVTLSKVGGKGLFVKEIEQAMLNHDIDMAVHSMKDMPAALPEGLVIGCIPEREDVRDALISKDHLHLHELPKGAIVGTSSLRRSAQLLQERPDLNIKWIRGNIDTRLEKLKNEEYDAIILAAAGLSRMGWSKEVVSEFLSPETCLPAVGQGALSIECRGDDEELLQLLAQFTNEYTKKTVLAERAFLKQMDGSCQVPIAGYATMNERDEIELTGLVASADGHTIIRETVSGTDPEAIGTACAKQMADKGAKDLIDKVKKDLSSQ.

The residue at position 241 (Cys-241) is an S-(dipyrrolylmethanemethyl)cysteine.

The protein belongs to the HMBS family. Monomer. Requires dipyrromethane as cofactor.

The enzyme catalyses 4 porphobilinogen + H2O = hydroxymethylbilane + 4 NH4(+). It functions in the pathway porphyrin-containing compound metabolism; protoporphyrin-IX biosynthesis; coproporphyrinogen-III from 5-aminolevulinate: step 2/4. In terms of biological role, tetrapolymerization of the monopyrrole PBG into the hydroxymethylbilane pre-uroporphyrinogen in several discrete steps. In Bacillus pumilus (strain SAFR-032), this protein is Porphobilinogen deaminase.